The sequence spans 358 residues: Peptide chain release factor 1 (358 aa).

Glutamine 233 carries the post-translational modification N5-methylglutamine.

It belongs to the prokaryotic/mitochondrial release factor family. Post-translationally, methylated by PrmC. Methylation increases the termination efficiency of RF1.

Its subcellular location is the cytoplasm. Functionally, peptide chain release factor 1 directs the termination of translation in response to the peptide chain termination codons UAG and UAA. The protein is Peptide chain release factor 1 of Clostridium botulinum (strain Loch Maree / Type A3).